We begin with the raw amino-acid sequence, 260 residues long: Adenosylcobinamide-GDP ribazoletransferase (260 aa).

6 consecutive transmembrane segments (helical) span residues 7-27 (WYFL…TRLP), 45-65 (LMGL…HWLG), 117-137 (AYGV…LASF), 145-165 (WALI…IALY), 187-207 (LLLG…ALAI), and 210-230 (WLIL…GRWF).

Belongs to the CobS family. Mg(2+) is required as a cofactor.

The protein localises to the cell inner membrane. It carries out the reaction alpha-ribazole + adenosylcob(III)inamide-GDP = adenosylcob(III)alamin + GMP + H(+). The enzyme catalyses alpha-ribazole 5'-phosphate + adenosylcob(III)inamide-GDP = adenosylcob(III)alamin 5'-phosphate + GMP + H(+). It participates in cofactor biosynthesis; adenosylcobalamin biosynthesis; adenosylcobalamin from cob(II)yrinate a,c-diamide: step 7/7. Its function is as follows. Joins adenosylcobinamide-GDP and alpha-ribazole to generate adenosylcobalamin (Ado-cobalamin). Also synthesizes adenosylcobalamin 5'-phosphate from adenosylcobinamide-GDP and alpha-ribazole 5'-phosphate. The sequence is that of Adenosylcobinamide-GDP ribazoletransferase from Synechocystis sp. (strain ATCC 27184 / PCC 6803 / Kazusa).